A 553-amino-acid polypeptide reads, in one-letter code: Arginine--tRNA ligase (553 aa).

The short motif at 130–140 (ANPTGDLHIGH) is the 'HIGH' region element.

It belongs to the class-I aminoacyl-tRNA synthetase family. In terms of assembly, monomer.

The protein localises to the cytoplasm. It carries out the reaction tRNA(Arg) + L-arginine + ATP = L-arginyl-tRNA(Arg) + AMP + diphosphate. The sequence is that of Arginine--tRNA ligase from Staphylococcus epidermidis (strain ATCC 12228 / FDA PCI 1200).